Reading from the N-terminus, the 523-residue chain is Cyclin-dependent kinase 17 (523 aa).

S9 carries the phosphoserine modification. Positions 30–55 are disordered; sequence TIEESSSKDNEPIVKNGRPPTSHSVH. S80, S92, and S105 each carry phosphoserine. The tract at residues 103-123 is disordered; it reads MGSDGESDQASGTSSDEVQSP. The span at 110 to 123 shows a compositional bias: polar residues; the sequence is DQASGTSSDEVQSP. A phosphoserine mark is found at S137, S146, S165, and S180. In terms of domain architecture, Protein kinase spans 192–473; sequence YIKLEKLGEG…AEEAMKHVYF (282 aa). Residues 198-206 and K221 contribute to the ATP site; that span reads LGEGTYATV. D313 acts as the Proton acceptor in catalysis. Residues 501 to 523 form a disordered region; sequence PGFRNSSYPETGHGKNRRQSMLF. Positions 514 to 523 are enriched in basic residues; the sequence is GKNRRQSMLF.

Belongs to the protein kinase superfamily. CMGC Ser/Thr protein kinase family. CDC2/CDKX subfamily. In terms of assembly, found in a complex containing CABLES1, CDK16 and TDRD7. Interacts with TDRD7.

It carries out the reaction L-seryl-[protein] + ATP = O-phospho-L-seryl-[protein] + ADP + H(+). It catalyses the reaction L-threonyl-[protein] + ATP = O-phospho-L-threonyl-[protein] + ADP + H(+). Functionally, may play a role in terminally differentiated neurons. Has a Ser/Thr-phosphorylating activity for histone H1. This is Cyclin-dependent kinase 17 (Cdk17) from Mus musculus (Mouse).